A 205-amino-acid polypeptide reads, in one-letter code: Urease accessory protein UreG (205 aa).

A GTP-binding site is contributed by 14-21; sequence GPVGSGKT.

Belongs to the SIMIBI class G3E GTPase family. UreG subfamily. In terms of assembly, homodimer. UreD, UreF and UreG form a complex that acts as a GTP-hydrolysis-dependent molecular chaperone, activating the urease apoprotein by helping to assemble the nickel containing metallocenter of UreC. The UreE protein probably delivers the nickel.

The protein localises to the cytoplasm. Functionally, facilitates the functional incorporation of the urease nickel metallocenter. This process requires GTP hydrolysis, probably effectuated by UreG. This chain is Urease accessory protein UreG, found in Escherichia coli.